Here is a 496-residue protein sequence, read N- to C-terminus: UDP-N-acetylmuramoylalanine--D-glutamate ligase (496 aa).

Residue 130–136 (GTNGKTT) participates in ATP binding.

It belongs to the MurCDEF family. In terms of assembly, interacts with PknA. Post-translationally, phosphorylated by PknA.

Its subcellular location is the cytoplasm. The enzyme catalyses UDP-N-acetyl-alpha-D-muramoyl-L-alanine + D-glutamate + ATP = UDP-N-acetyl-alpha-D-muramoyl-L-alanyl-D-glutamate + ADP + phosphate + H(+). Its pathway is cell wall biogenesis; peptidoglycan biosynthesis. Its function is as follows. Cell wall formation. Catalyzes the addition of glutamate to the nucleotide precursor UDP-N-acetylmuramoyl-L-alanine (UMA). The chain is UDP-N-acetylmuramoylalanine--D-glutamate ligase from Mycobacterium tuberculosis (strain ATCC 25177 / H37Ra).